A 1310-amino-acid polypeptide reads, in one-letter code: Cadherin-related family member 2 (1310 aa).

A signal peptide spans 1 to 20; that stretch reads MAQLWLSCFLLPALVVSVAA. Over 21-1154 the chain is Extracellular; the sequence is NVAPKFLANM…ESDLSKQLIS (1134 aa). Cadherin domains follow at residues 27–124, 125–241, and 242–353; these read LANM…APVF, QNTA…DPQF, and VREF…KPEF. N-linked (GlcNAc...) asparagine glycans are attached at residues N29, N134, N182, N188, N195, N300, N355, N371, N401, N460, N565, N600, N616, N632, N680, N696, N701, N775, N821, N871, N877, N911, N932, and N1107. 6 Cadherin domains span residues 368 to 480, 481 to 586, 586 to 695, 696 to 808, 810 to 928, and 930 to 1058; these read AQVN…RPTF, PQSL…APVV, VSGS…LPIF, NQSS…PPTL, VASL…APYF, and PENK…TPKE. Residues 1155 to 1175 form a helical membrane-spanning segment; sequence VIIGLGVALLLVLVIMTMAFV. The Cytoplasmic portion of the chain corresponds to 1176-1310; the sequence is CVRKSYNRKL…TNAGLDTTDL (135 aa). A mediates interaction with USH1C and MYO7B and is required for proper localization to microvilli tips and function in microvilli organization region spans residues 1180–1310; it reads SYNRKLQAMK…TNAGLDTTDL (131 aa). S1248 is modified (phosphoserine). The span at 1259-1268 shows a compositional bias: basic and acidic residues; it reads NSQEIKEHRP. The segment at 1259 to 1310 is disordered; the sequence is NSQEIKEHRPPHTPPEPDPEPLSVVLLGRQAGASGQLEGPSYTNAGLDTTDL. S1299 is subject to Phosphoserine. A compositionally biased stretch (polar residues) spans 1299 to 1310; that stretch reads SYTNAGLDTTDL.

Part of the IMAC/intermicrovillar adhesion complex/intermicrovillar tip-link complex composed of ANKS4B, MYO7B, USH1C, CDHR2 and CDHR5. Interacts with MAST2. Interacts (via cytoplasmic domain) with USH1C and MYO7B; required for proper localization of CDHR2 to microvilli tips and its function in brush border differentiation. In terms of tissue distribution, highly expressed in liver, kidney and colon. Moderately expressed in small intestine. Down-regulated in a number of liver and colon cancers. Expressed in duodenum with higher expression in enterocytes along the villus axis and lower expression in crypts (at protein level).

The protein resides in the apical cell membrane. The protein localises to the cell projection. It is found in the microvillus membrane. It localises to the cell junction. Intermicrovillar adhesion molecule that forms, via its extracellular domain, calcium-dependent heterophilic complexes with CDHR5 on adjacent microvilli. Thereby, controls the packing of microvilli at the apical membrane of epithelial cells. Through its cytoplasmic domain, interacts with microvillus cytoplasmic proteins to form the intermicrovillar adhesion complex/IMAC. This complex plays a central role in microvilli and epithelial brush border differentiation. May also play a role in cell-cell adhesion and contact inhibition in epithelial cells. This is Cadherin-related family member 2 from Homo sapiens (Human).